The following is a 253-amino-acid chain: 1-(5-phosphoribosyl)-5-[(5-phosphoribosylamino)methylideneamino] imidazole-4-carboxamide isomerase (253 aa).

Aspartate 8 functions as the Proton acceptor in the catalytic mechanism. Aspartate 131 serves as the catalytic Proton donor.

This sequence belongs to the HisA/HisF family.

The protein resides in the cytoplasm. It carries out the reaction 1-(5-phospho-beta-D-ribosyl)-5-[(5-phospho-beta-D-ribosylamino)methylideneamino]imidazole-4-carboxamide = 5-[(5-phospho-1-deoxy-D-ribulos-1-ylimino)methylamino]-1-(5-phospho-beta-D-ribosyl)imidazole-4-carboxamide. The protein operates within amino-acid biosynthesis; L-histidine biosynthesis; L-histidine from 5-phospho-alpha-D-ribose 1-diphosphate: step 4/9. The polypeptide is 1-(5-phosphoribosyl)-5-[(5-phosphoribosylamino)methylideneamino] imidazole-4-carboxamide isomerase (Polynucleobacter asymbioticus (strain DSM 18221 / CIP 109841 / QLW-P1DMWA-1) (Polynucleobacter necessarius subsp. asymbioticus)).